A 148-amino-acid chain; its full sequence is UPF0756 membrane protein KPN78578_11500 (148 aa).

The next 4 helical transmembrane spans lie at 14-34, 51-71, 86-106, and 121-141; these read ALGF…LIIV, LTVG…SGTL, LLAI…VSLM, and VLGV…AGII.

The protein belongs to the UPF0756 family.

The protein resides in the cell membrane. The chain is UPF0756 membrane protein KPN78578_11500 from Klebsiella pneumoniae subsp. pneumoniae (strain ATCC 700721 / MGH 78578).